A 94-amino-acid polypeptide reads, in one-letter code: Large ribosomal subunit protein bL27 (94 aa).

The propeptide occupies 1–9; it reads MNLANLQLF. The segment at 11–33 is disordered; the sequence is HKKGGGSTSNGRDSQAKRLGAKA.

The protein belongs to the bacterial ribosomal protein bL27 family. In terms of processing, the N-terminus is cleaved by ribosomal processing cysteine protease Prp.

The chain is Large ribosomal subunit protein bL27 from Streptococcus agalactiae serotype V (strain ATCC BAA-611 / 2603 V/R).